Here is a 255-residue protein sequence, read N- to C-terminus: Adenosine 5'-phosphosulfate reductase (255 aa).

The interval 1-39 is disordered; sequence MMTAEVRTPEQGGGPLTTEPRAPRSAPGHADASAPAFGP. Positions 137, 138, 220, and 223 each coordinate [4Fe-4S] cluster. Cys246 functions as the Nucleophile; cysteine thiosulfonate intermediate in the catalytic mechanism.

This sequence belongs to the PAPS reductase family. CysH subfamily. The cofactor is [4Fe-4S] cluster.

It is found in the cytoplasm. It catalyses the reaction [thioredoxin]-disulfide + sulfite + AMP + 2 H(+) = adenosine 5'-phosphosulfate + [thioredoxin]-dithiol. The protein operates within sulfur metabolism; hydrogen sulfide biosynthesis; sulfite from sulfate. Functionally, catalyzes the formation of sulfite from adenosine 5'-phosphosulfate (APS) using thioredoxin as an electron donor. The sequence is that of Adenosine 5'-phosphosulfate reductase from Deinococcus radiodurans (strain ATCC 13939 / DSM 20539 / JCM 16871 / CCUG 27074 / LMG 4051 / NBRC 15346 / NCIMB 9279 / VKM B-1422 / R1).